The chain runs to 956 residues: Probable hypoxanthine oxidase XdhD (956 aa).

Residues Gln414, Phe445, and Ala727 each coordinate Mo-molybdopterin.

This sequence belongs to the xanthine dehydrogenase family. It depends on [2Fe-2S] cluster as a cofactor. The cofactor is Mo-molybdopterin.

Its function is as follows. Probably has no xanthine dehydrogenase activity; however deletion results in increased adenine sensitivity, suggesting that this protein contributes to the conversion of adenine to guanine nucleotides during purine salvage. The sequence is that of Probable hypoxanthine oxidase XdhD (xdhD) from Escherichia coli O157:H7.